The sequence spans 540 residues: Putative cysteine ligase BshC (540 aa).

Residues 457-477 adopt a coiled-coil conformation; it reads EKNRAFIQGQIAFLKERMERE.

The protein belongs to the BshC family.

Its function is as follows. Involved in bacillithiol (BSH) biosynthesis. May catalyze the last step of the pathway, the addition of cysteine to glucosamine malate (GlcN-Mal) to generate BSH. This is Putative cysteine ligase BshC from Shouchella clausii (strain KSM-K16) (Alkalihalobacillus clausii).